The primary structure comprises 785 residues: Endonuclease MutS2 (785 aa).

333-340 provides a ligand contact to ATP; that stretch reads GPNTGGKT. The Smr domain maps to 710–785; that stretch reads LDLRGQRYDE…GNGATIVQLK (76 aa).

The protein belongs to the DNA mismatch repair MutS family. MutS2 subfamily. In terms of assembly, homodimer. Binds to stalled ribosomes, contacting rRNA.

Functionally, endonuclease that is involved in the suppression of homologous recombination and thus may have a key role in the control of bacterial genetic diversity. Acts as a ribosome collision sensor, splitting the ribosome into its 2 subunits. Detects stalled/collided 70S ribosomes which it binds and splits by an ATP-hydrolysis driven conformational change. Acts upstream of the ribosome quality control system (RQC), a ribosome-associated complex that mediates the extraction of incompletely synthesized nascent chains from stalled ribosomes and their subsequent degradation. Probably generates substrates for RQC. The sequence is that of Endonuclease MutS2 from Lactobacillus acidophilus (strain ATCC 700396 / NCK56 / N2 / NCFM).